A 203-amino-acid polypeptide reads, in one-letter code: Secreted phosphoprotein 24 (203 aa).

The first 23 residues, 1–23 (MEKMAMKMLVIFVLGMNHWTCTG), serve as a signal peptide directing secretion. Disulfide bonds link Cys86–Cys97 and Cys110–Cys128. Ser90 carries the phosphoserine modification. Residues Ser138, Ser139, Ser166, and Ser175 each carry the phosphoserine modification.

The protein belongs to the SPP2 family. Multiply phosphorylated at serine residues in Ser-X-Glu/Ser(P) sequences, a recognition motif for phosphorylation by secretory pathway protein kinase. Post-translationally, phosphorylation sites are present in the extracellular medium. In terms of tissue distribution, in liver and bone but not in heart, lung, kidney, or spleen.

It localises to the secreted. Its function is as follows. Could coordinate an aspect of bone turnover. This is Secreted phosphoprotein 24 (SPP2) from Bos taurus (Bovine).